The primary structure comprises 138 residues: Cysteine desulfuration protein SufE (138 aa).

C51 functions as the Cysteine persulfide intermediate in the catalytic mechanism.

It belongs to the SufE family. Homodimer. Interacts with SufS.

It localises to the cytoplasm. It functions in the pathway cofactor biosynthesis; iron-sulfur cluster biosynthesis. Functionally, participates in cysteine desulfuration mediated by SufS. Cysteine desulfuration mobilizes sulfur from L-cysteine to yield L-alanine and constitutes an essential step in sulfur metabolism for biosynthesis of a variety of sulfur-containing biomolecules. Functions as a sulfur acceptor for SufS, by mediating the direct transfer of the sulfur atom from the S-sulfanylcysteine of SufS, an intermediate product of cysteine desulfuration process. The polypeptide is Cysteine desulfuration protein SufE (Escherichia coli O45:K1 (strain S88 / ExPEC)).